Here is a 274-residue protein sequence, read N- to C-terminus: E3 ubiquitin-protein ligase complex SLX5-SLX8 subunit SLX8 (274 aa).

2 disordered regions span residues 1 to 117 (MARR…GNNI) and 136 to 159 (ANTP…TNSK). A compositionally biased stretch (basic and acidic residues) spans 13–28 (ENLRIKRVRLESVRQN). A Phosphoserine modification is found at S50. T66 bears the Phosphothreonine mark. Acidic residues predominate over residues 66-75 (TSEEDGDDDL). S67 is modified (phosphoserine). The span at 97 to 108 (GNHDRETMHTEE) shows a compositional bias: basic and acidic residues. The RING-type zinc-finger motif lies at 206-250 (CPICFEPPETALMTLCGHVFCCPCLFQMVNSSRTCRQFGHCALCR).

As to quaternary structure, component of the heterodimeric SUMO-targeted ubiquitin ligase (STUbL) complex composed of SLX5 and SLX8.

It is found in the nucleus. The protein resides in the chromosome. The protein localises to the centromere. Its subcellular location is the kinetochore. It catalyses the reaction S-ubiquitinyl-[E2 ubiquitin-conjugating enzyme]-L-cysteine + [acceptor protein]-L-lysine = [E2 ubiquitin-conjugating enzyme]-L-cysteine + N(6)-ubiquitinyl-[acceptor protein]-L-lysine.. The protein operates within protein modification; protein ubiquitination. Its function is as follows. Component of the SUMO-targeted ubiquitin ligase (STUbL) complex SLX5/SLX8 that mediates ubiquitination and subsequent desumoylation of sumoylated proteins and proteins containing SUMO-like domains for their degradation. The STUbL complex SLX5/SLX8 stimulates ubiquitin conjugating enzymes, including UBC1, UBC4, UBC5 and UBC13-MMS2, and mediates the proteolytic down-regulation of sumoylated proteins. The STUbL complex SLX5/SLX8 is involved in ubiquitin-mediated degradation of histone variant CSE4, preventing mislocalization to euchromatin. The complex plays an essential role in maintenance of chromosome stability and links SUMO-dependent ubiquitination to a centromere-specific function during mitosis. The complex is involved in proteolysis of spindle positioning protein KAR9 and ensures correct spindle function by regulating levels of microtubule-associated proteins. During replication, the complex helps to prevent DNA lesions via recombination and has a role in localizing the DNA damage protein DCD2. The complex especially ubiquitinates the nuclease YEN1 and prevents persistent accumulation of a fraction of YEN1 associated with sites of activity in late G2/M and helps maintain the balance between pro- and anti-crossover pathways during homologous recombination. It is also involved in ubiquitin-mediated degradation of DNA repair proteins RAD52 and RAD57. Finally, the complex is recruited to distinct genomic hotspots of non-H2B protein ubiquitination (ub-hotspots) by the sumoylated transcription factor-like protein EUC1 where it ubiquitinates EUC1 and presumably other targets. This is E3 ubiquitin-protein ligase complex SLX5-SLX8 subunit SLX8 (SLX8) from Saccharomyces cerevisiae (strain ATCC 204508 / S288c) (Baker's yeast).